Consider the following 1407-residue polypeptide: DNA-directed RNA polymerase subunit beta' (1407 aa).

Residues Cys-70, Cys-72, Cys-85, and Cys-88 each contribute to the Zn(2+) site. Asp-460, Asp-462, and Asp-464 together coordinate Mg(2+). 4 residues coordinate Zn(2+): Cys-814, Cys-888, Cys-895, and Cys-898.

The protein belongs to the RNA polymerase beta' chain family. As to quaternary structure, the RNAP catalytic core consists of 2 alpha, 1 beta, 1 beta' and 1 omega subunit. When a sigma factor is associated with the core the holoenzyme is formed, which can initiate transcription. The cofactor is Mg(2+). It depends on Zn(2+) as a cofactor.

The catalysed reaction is RNA(n) + a ribonucleoside 5'-triphosphate = RNA(n+1) + diphosphate. In terms of biological role, DNA-dependent RNA polymerase catalyzes the transcription of DNA into RNA using the four ribonucleoside triphosphates as substrates. The polypeptide is DNA-directed RNA polymerase subunit beta' (Salmonella paratyphi A (strain ATCC 9150 / SARB42)).